The chain runs to 662 residues: Probable quinol oxidase subunit 1 (662 aa).

A run of 2 helical transmembrane segments spans residues Trp-14–Ile-34 and Val-58–Ile-78. Residue His-102 participates in Fe(II)-heme a binding. 8 helical membrane passes run Gly-103–Val-123, Val-140–Gly-160, Ile-187–Ile-207, Phe-228–Met-248, Phe-273–Tyr-293, Met-311–Phe-331, Gly-336–Val-356, and Met-376–Leu-396. 4 residues coordinate Cu cation: His-279, Tyr-283, His-328, and His-329. The 1'-histidyl-3'-tyrosine (His-Tyr) cross-link spans His-279–Tyr-283. Residue His-414 participates in heme a3 binding. Transmembrane regions (helical) follow at residues Phe-415 to Tyr-435, Cys-451 to Leu-471, Ile-493 to Val-513, Pro-587 to Ile-604, and Val-608 to Phe-627. A Fe(II)-heme a-binding site is contributed by His-416.

Belongs to the heme-copper respiratory oxidase family. Cu cation serves as cofactor. Ferriheme a is required as a cofactor. Requires Heme A3. as cofactor.

The protein resides in the cell membrane. The enzyme catalyses 2 a quinol + O2 = 2 a quinone + 2 H2O. The protein operates within energy metabolism; oxidative phosphorylation. Its function is as follows. Catalyzes quinol oxidation with the concomitant reduction of oxygen to water. The chain is Probable quinol oxidase subunit 1 (qoxB) from Staphylococcus aureus (strain COL).